A 497-amino-acid polypeptide reads, in one-letter code: 4,4'-diaponeurosporene oxygenase (497 aa).

Residue 7 to 19 coordinates FAD; that stretch reads VIGGGLGGISAAI.

The protein belongs to the carotenoid/retinoid oxidoreductase family. CrtP subfamily. FAD is required as a cofactor.

The catalysed reaction is all-trans-4,4'-diaponeurosporene + 2 AH2 + 2 O2 = 4,4'-diaponeurosporenal + 2 A + 3 H2O. It participates in carotenoid biosynthesis; staphyloxanthin biosynthesis; staphyloxanthin from farnesyl diphosphate: step 3/5. Involved in the biosynthesis of the yellow-orange carotenoid staphyloxanthin, which plays a role in the virulence via its protective function against oxidative stress. Catalyzes the oxidation of the terminal methyl side group of 4,4'-diaponeurosporene to form 4,4'-diaponeurosporen-4-al. The protein is 4,4'-diaponeurosporene oxygenase of Staphylococcus aureus (strain USA300).